The following is a 136-amino-acid chain: Large ribosomal subunit protein uL16 (136 aa).

It belongs to the universal ribosomal protein uL16 family. In terms of assembly, part of the 50S ribosomal subunit.

In terms of biological role, binds 23S rRNA and is also seen to make contacts with the A and possibly P site tRNAs. The chain is Large ribosomal subunit protein uL16 from Shewanella baltica (strain OS155 / ATCC BAA-1091).